Reading from the N-terminus, the 143-residue chain is Holo-[acyl-carrier-protein] synthase (143 aa).

Mg(2+) is bound by residues Asp9 and Glu63.

The protein belongs to the P-Pant transferase superfamily. AcpS family. It depends on Mg(2+) as a cofactor.

It is found in the cytoplasm. It catalyses the reaction apo-[ACP] + CoA = holo-[ACP] + adenosine 3',5'-bisphosphate + H(+). Its function is as follows. Transfers the 4'-phosphopantetheine moiety from coenzyme A to a Ser of acyl-carrier-protein. This is Holo-[acyl-carrier-protein] synthase from Burkholderia mallei (strain NCTC 10247).